Here is an 88-residue protein sequence, read N- to C-terminus: DNA-directed RNA polymerase subunit omega (88 aa).

The protein belongs to the RNA polymerase subunit omega family. The RNAP catalytic core consists of 2 alpha, 1 beta, 1 beta' and 1 omega subunit. When a sigma factor is associated with the core the holoenzyme is formed, which can initiate transcription.

It carries out the reaction RNA(n) + a ribonucleoside 5'-triphosphate = RNA(n+1) + diphosphate. Functionally, promotes RNA polymerase assembly. Latches the N- and C-terminal regions of the beta' subunit thereby facilitating its interaction with the beta and alpha subunits. The sequence is that of DNA-directed RNA polymerase subunit omega from Pseudomonas aeruginosa (strain LESB58).